The chain runs to 368 residues: NAD(P)H-quinone oxidoreductase subunit 1, chloroplastic (368 aa).

9 helical membrane passes run 27-47, 97-117, 130-150, 166-186, 204-224, 249-269, 270-290, 305-325, and 348-368; these read FLWI…GVLV, WLFN…YLVI, IGVF…LMAG, AAQS…IALL, FLSW…IASL, YSGM…LVSS, LFVT…FSLF, VISI…FLFI, and FLLP…LFLL.

It belongs to the complex I subunit 1 family. In terms of assembly, NDH is composed of at least 16 different subunits, 5 of which are encoded in the nucleus.

It is found in the plastid. Its subcellular location is the chloroplast thylakoid membrane. The catalysed reaction is a plastoquinone + NADH + (n+1) H(+)(in) = a plastoquinol + NAD(+) + n H(+)(out). It catalyses the reaction a plastoquinone + NADPH + (n+1) H(+)(in) = a plastoquinol + NADP(+) + n H(+)(out). In terms of biological role, NDH shuttles electrons from NAD(P)H:plastoquinone, via FMN and iron-sulfur (Fe-S) centers, to quinones in the photosynthetic chain and possibly in a chloroplast respiratory chain. The immediate electron acceptor for the enzyme in this species is believed to be plastoquinone. Couples the redox reaction to proton translocation, and thus conserves the redox energy in a proton gradient. The polypeptide is NAD(P)H-quinone oxidoreductase subunit 1, chloroplastic (Marchantia polymorpha (Common liverwort)).